The sequence spans 541 residues: MAKLVECVPNFSEGCNKEVIEALGRAISQTPGCTLLDVDAGASTNRTVYTFVGTPEAVVEGALSAARMAWELIDMSRHKGEHPRMGALDVCPFVPVMNISMEECVICAHVFGQRLSEELGVPVYLYGEAARQESRRTLPAIRAGEYEALPKKLEKPEWVPDFGPPAFVPQWGATVTGARTFLIAYNINLLCTKELAHRIALNIREQGRGADQPGSLKKVQGIGWYLEEENIAQVSTNLLDFETTPLHAVYEEVCYNAEALKLPVVGSQLVGLVPKKAMLDAAEFYIKKEKLFILEEEHKIKLVVSRLGLDSLSPFNPRERIIEYLVQAGQEDKGLVTKPLGAFVRAVGGRSAAPGGGSVAATAASLGAALGCMVGLMSYGKRQFEQLDSIMRNVIPPLHQAMDELVAMVDADSRAFSSYMEAMKLPKSTPEERERRVVAMQQGLKTAVEVPCTLAVKVNNLWSSLKMLAHHGNLACKSDLQVGAKMLEAAVFGAYFNVMINLKDITDEKFKTETSQMVTRLLEEAKQGSALVLALLEKREA.

Residues 1 to 181 (MAKLVECVPN…GATVTGARTF (181 aa)) are formiminotransferase N-subdomain. His-82 serves as the catalytic For formimidoyltransferase activity. 163–172 (GPPAFVPQWG) serves as a coordination point for folate. Residues 182-326 (LIAYNINLLC…PRERIIEYLV (145 aa)) form a formiminotransferase C-subdomain region. Positions 327–334 (QAGQEDKG) are linker. The interval 335 to 541 (LVTKPLGAFV…VLALLEKREA (207 aa)) is cyclodeaminase/cyclohydrolase. Asp-412 (for cyclodeaminase activity) is an active-site residue.

This sequence in the C-terminal section; belongs to the cyclodeaminase/cyclohydrolase family. The protein in the N-terminal section; belongs to the formiminotransferase family. In terms of assembly, homooctamer, including four polyglutamate binding sites. The subunits are arranged as a tetramer of dimers, and form a planar ring-shaped structure.

The protein resides in the cytoplasm. It localises to the cytosol. The protein localises to the golgi apparatus. Its subcellular location is the cytoskeleton. It is found in the microtubule organizing center. The protein resides in the centrosome. It localises to the centriole. It catalyses the reaction 5-formimidoyltetrahydrofolate + L-glutamate = N-formimidoyl-L-glutamate + (6S)-5,6,7,8-tetrahydrofolate. The catalysed reaction is 5-formimidoyltetrahydrofolate + 2 H(+) = (6R)-5,10-methenyltetrahydrofolate + NH4(+). It participates in amino-acid degradation; L-histidine degradation into L-glutamate; L-glutamate from N-formimidoyl-L-glutamate (transferase route): step 1/1. Folate-dependent enzyme, that displays both transferase and deaminase activity. Serves to channel one-carbon units from formiminoglutamate to the folate pool. In terms of biological role, binds and promotes bundling of vimentin filaments originating from the Golgi. The chain is Formimidoyltransferase-cyclodeaminase (FTCD) from Gallus gallus (Chicken).